A 613-amino-acid polypeptide reads, in one-letter code: MTEASARTIGPLPSRFSRDPKTPRSTDNAAAALLLAFTVLAILWANSPWAQSYSTFWDTHVAVSFGEYRAELSVKHLVNDGLMAFFFFIVGLEVKSEFVIGELTDRSRAAVPVVAAIAGLIVPAVIFLTFNPSGPDAQAWGVVISTDTAFLVGALAVIKPKFPARLRIFLLTLAVVDDVGALGAIALFYTDDLKLAPLAVAALLIAALAMVRRLPSLRGPAYAVLGFALWIALYLAHVHPTLAGVAVAVLIPVFTPERRQVEQTVDLVRAFRQSPNPQYARAVTRGLRESISINERLQTAVGPYVSFVVLPIFALANAGVHLDEQTITAAMSSTLTWGIVAGLVVGKFVGITAATALMSATGWGQLAPGLSLRRVAGGAALSGIGFTISLFIVDVAIEDPARQDEARVGVLIASVLAFTLSWALFRITDWISPPEPVGLTLVRPVDPERDHIRGDPDAPLVLVEYGDYECPFCGRATGAIDEVRTHFGDDLLYVWRHFPLERAHPRSFDAARASEGAAAQGKFFEMGRELFAHQDDLEWSDMYRYAVAIGLDIEQFDQDVRVHASKVLHRVRDDAQDAEVMDLNSTPTFFVNGKRHKGPWDAASLIRALEAGR.

The tract at residues 1–24 (MTEASARTIGPLPSRFSRDPKTPR) is disordered. Residues 1 to 408 (MTEASARTIG…DPARQDEARV (408 aa)) form a na(+)/H(+) antiporter NhaA region. A run of 11 helical transmembrane segments spans residues 29-49 (AAAA…NSPW), 81-101 (GLMA…FVIG), 110-130 (AVPV…FLTF), 138-158 (QAWG…LAVI), 168-188 (IFLL…IALF), 191-211 (DDLK…LAMV), 231-251 (IALY…AVLI), 300-320 (AVGP…NAGV), 337-357 (WGIV…ATAL), 377-397 (GGAA…DVAI), and 408-428 (VGVL…FRIT). The Thioredoxin domain maps to 409–613 (GVLIASVLAF…SLIRALEAGR (205 aa)).

It in the N-terminal section; belongs to the NhaA Na(+)/H(+) (TC 2.A.33) antiporter family.

Its subcellular location is the cell membrane. It catalyses the reaction Na(+)(in) + 2 H(+)(out) = Na(+)(out) + 2 H(+)(in). In terms of biological role, na(+)/H(+) antiporter that extrudes sodium in exchange for external protons. The chain is Na(+)/H(+) antiporter NhaA 1 from Mycobacterium sp. (strain JLS).